The following is a 179-amino-acid chain: Mediator of RNA polymerase II transcription subunit 29 (179 aa).

Belongs to the Mediator complex subunit 29 family. In terms of assembly, component of the Mediator complex.

The protein localises to the nucleus. Its function is as follows. Component of the Mediator complex, a coactivator involved in the regulated transcription of nearly all RNA polymerase II-dependent genes. Mediator functions as a bridge to convey information from gene-specific regulatory proteins to the basal RNA polymerase II transcription machinery. Mediator is recruited to promoters by direct interactions with regulatory proteins and serves as a scaffold for the assembly of a functional preinitiation complex with RNA polymerase II and the general transcription factors. The sequence is that of Mediator of RNA polymerase II transcription subunit 29 (med29) from Danio rerio (Zebrafish).